Consider the following 441-residue polypeptide: Xylose isomerase (441 aa).

Active-site residues include H99 and D102. Mn(2+)-binding residues include E230, E266, D294, D305, D307, and D337.

Belongs to the xylose isomerase family. As to quaternary structure, homotetramer. The cofactor is Mn(2+).

The protein resides in the cytoplasm. It carries out the reaction alpha-D-xylose = alpha-D-xylulofuranose. This chain is Xylose isomerase (xylA), found in Geobacillus stearothermophilus (Bacillus stearothermophilus).